The following is an 83-amino-acid chain: uncharacterized protein (83 aa).

This is an uncharacterized protein from Lactuca sativa (Garden lettuce).